We begin with the raw amino-acid sequence, 270 residues long: MSTEAHPTVQGCLVSFPTPHILLLTLNRPEKRNCISLATSAEIQRLWTWFDTQPALYVAIITGTGESFCAGADLKEWNDLNARGITNEMTAPGLAGLPRRRGSKPIIAAVNGYCLGGGFEMVANCDIVVASENATFGLPEVQRGIAAVAGSLPRLVRVLGKQRAAEIALSGLSFSASQLERWGLVNRVVEHDQLLATAVEIATAISRNSPDSVRVTMEGLHYGWEMASVEEASSALVDQWYAKLMAGENFHEGVRAFVEKRKPQWRPSKL.

Positions 268 to 270 (SKL) match the PTS1-type peroxisomal targeting signal motif.

It belongs to the enoyl-CoA hydratase/isomerase family.

The protein localises to the peroxisome. The protein operates within siderophore biosynthesis. Its function is as follows. Mevalonyl-coenzyme A hydratase; part of the siderophore biosynthetic pathway. Aspergillus fumigatus produces 4 types of siderophores, low-molecular-mass iron chelators, including excreted fusarinine C (FsC) and triacetylfusarinine C (TAFC) for iron uptake and intacellular ferricrocin (FC) for hyphal and hydroxyferricrocin (HFC) for conidial iron distribution and storage. TAFC consists of 3 N(2)-acetyl-N(5)-anhydromevalonyl-N(5)-hydroxyornithine residues cyclically linked by ester bonds; FC is a cyclic hexapeptide with the structure Gly-Ser-Gly-(N(5)-acetyl-N(5)-hydroxyornithine)x3. The biosynthesis of all four siderophores depends on the hydroxylation of ornithine, catalyzed by the monooxygenase sidA. Subsequently, the pathways for biosynthesis of extra- and intracellular siderophores split. For biosynthesis of extracellular siderophores, the transacylase sidF transfers anhydromevalonyl to N(5)-hydroxyornithine. The required anhydromevalonyl-CoA moiety is derived from mevalonate by CoA ligation and dehydration catalyzed by sidI and sidH respectively. The acetylation of N(5)-hydroxyornithine for FC biosynthesis involves the constitutively expressed sidL. FC is hydroxylated to HFC by an as yet uncharacterized enzyme during conidiation. Assembly of fusarinine C (FsC) and FC is catalyzed by two different nonribosomal peptide synthetases (NRPS), sidD and sidC respectively. Subsequently, sidG catalyzes N2-acetylation of FsC for forming TAFC. Both extra- and intracellular siderophores are crucial for growth during iron limitation and virulence. The polypeptide is Mevalonyl-coenzyme A hydratase sidH (Aspergillus fumigatus (strain ATCC MYA-4609 / CBS 101355 / FGSC A1100 / Af293) (Neosartorya fumigata)).